Consider the following 211-residue polypeptide: B3 domain-containing protein At5g42700 (211 aa).

Residues F110–G201 constitute a DNA-binding region (TF-B3).

It is found in the nucleus. This chain is B3 domain-containing protein At5g42700, found in Arabidopsis thaliana (Mouse-ear cress).